The chain runs to 153 residues: Aspartate carbamoyltransferase regulatory chain (153 aa).

Residues Cys109, Cys114, Cys138, and Cys141 each coordinate Zn(2+).

The protein belongs to the PyrI family. In terms of assembly, contains catalytic and regulatory chains. Zn(2+) serves as cofactor.

Involved in allosteric regulation of aspartate carbamoyltransferase. In Shigella flexneri serotype 5b (strain 8401), this protein is Aspartate carbamoyltransferase regulatory chain.